We begin with the raw amino-acid sequence, 138 residues long: MATRTQARGAVVELLYAFESGNEEIKKIASSMLEEKKIKNNQLAFALSLFNGVLEKINEIDALIEPHLKDWDFKRLGSMEKAILRLGAYEIGFTPTQNPIIINECIELGKLYAEPNTPKFLNAILDSLSKKLAQKPLN.

Belongs to the NusB family.

Functionally, involved in transcription antitermination. Required for transcription of ribosomal RNA (rRNA) genes. Binds specifically to the boxA antiterminator sequence of the ribosomal RNA (rrn) operons. This Helicobacter pylori (strain Shi470) protein is Transcription antitermination protein NusB.